The primary structure comprises 558 residues: Pentatricopeptide repeat-containing protein At1g06140, mitochondrial (558 aa).

Residues Met-1–Leu-79 constitute a mitochondrion transit peptide. 13 PPR repeats span residues Glu-38–Trp-68, Asn-71–His-103, Asp-108–Lys-142, Asp-143–Arg-173, Asn-174–Leu-208, Asp-209–Asp-243, Ser-245–Arg-275, Asn-276–Pro-310, Asn-311–Met-345, Asp-346–Arg-376, Asn-377–Pro-411, Asn-412–Pro-447, and Glu-448–Ser-482. The segment at Ala-483 to Gly-558 is type E motif.

It belongs to the PPR family. PCMP-E subfamily.

The protein localises to the mitochondrion. The polypeptide is Pentatricopeptide repeat-containing protein At1g06140, mitochondrial (PCMP-E61) (Arabidopsis thaliana (Mouse-ear cress)).